A 301-amino-acid polypeptide reads, in one-letter code: Alpha-ketoglutarate-dependent sulfate ester dioxygenase (301 aa).

Histidine 81 lines the substrate pocket. Fe cation-binding residues include histidine 108 and aspartate 110. Residue valine 111 coordinates substrate. Threonine 135 serves as a coordination point for 2-oxoglutarate. Histidine 264 provides a ligand contact to Fe cation. 2-oxoglutarate contacts are provided by arginine 275 and arginine 279.

The protein belongs to the TfdA dioxygenase family. In terms of assembly, homotetramer. Fe(2+) serves as cofactor.

It carries out the reaction a primary linear alkyl sulfate ester + 2-oxoglutarate + O2 = an aldehyde + sulfate + succinate + CO2 + H(+). It catalyses the reaction 2-ethylhexyl sulfate + 2-oxoglutarate + O2 = 2-ethylhexanal + sulfate + succinate + CO2 + H(+). The catalysed reaction is decyl sulfate + 2-oxoglutarate + O2 = decanal + sulfate + succinate + CO2 + H(+). The enzyme catalyses hexyl sulfate + 2-oxoglutarate + O2 = hexanal + sulfate + succinate + CO2 + H(+). It carries out the reaction nonyl sufate + 2-oxoglutarate + O2 = nonanal + sulfate + succinate + CO2 + H(+). Its activity is regulated as follows. Strongly stimulated by ascorbate. Functionally, catalyzes the oxygenolytic cleavage of 2-ethylhexyl sulfate (2-EHS) in the presence of alpha-ketoglutarate to yield 2-ethyl-hexanal and succinate, the decarboxylated form of alpha-ketoglutarate. It can accept a wide range of alpha-keto acids including 2-oxo-valerate, 2-oxo-adipate, 2-oxo-octanoate, 3-methyl-2-oxo-butyrate, oxaloacetate-alpha-ketoadipate, and alpha-ketooctanoate. It can catalyze the cleavage of medium-chain alkyl sulfate esters such as butylsulfate, pentylsulfate, hexylsulfate, heptylsulfate, octylsulfate, nonylsulfate, decylsulfate and sodium dodecyl sulfate (SDS). The polypeptide is Alpha-ketoglutarate-dependent sulfate ester dioxygenase (Pseudomonas putida (Arthrobacter siderocapsulatus)).